Here is a 126-residue protein sequence, read N- to C-terminus: S-adenosylmethionine decarboxylase proenzyme (126 aa).

The Schiff-base intermediate with substrate; via pyruvic acid role is filled by S63. Pyruvic acid (Ser); by autocatalysis is present on S63. H68 (proton acceptor; for processing activity) is an active-site residue. The active-site Proton donor; for catalytic activity is the C83.

It belongs to the prokaryotic AdoMetDC family. Type 1 subfamily. In terms of assembly, heterotetramer of two alpha and two beta chains arranged as a dimer of alpha/beta heterodimers. Requires pyruvate as cofactor. Is synthesized initially as an inactive proenzyme. Formation of the active enzyme involves a self-maturation process in which the active site pyruvoyl group is generated from an internal serine residue via an autocatalytic post-translational modification. Two non-identical subunits are generated from the proenzyme in this reaction, and the pyruvate is formed at the N-terminus of the alpha chain, which is derived from the carboxyl end of the proenzyme. The post-translation cleavage follows an unusual pathway, termed non-hydrolytic serinolysis, in which the side chain hydroxyl group of the serine supplies its oxygen atom to form the C-terminus of the beta chain, while the remainder of the serine residue undergoes an oxidative deamination to produce ammonia and the pyruvoyl group blocking the N-terminus of the alpha chain.

It carries out the reaction S-adenosyl-L-methionine + H(+) = S-adenosyl 3-(methylsulfanyl)propylamine + CO2. The protein operates within amine and polyamine biosynthesis; S-adenosylmethioninamine biosynthesis; S-adenosylmethioninamine from S-adenosyl-L-methionine: step 1/1. Catalyzes the decarboxylation of S-adenosylmethionine to S-adenosylmethioninamine (dcAdoMet), the propylamine donor required for the synthesis of the polyamines spermine and spermidine from the diamine putrescine. This is S-adenosylmethionine decarboxylase proenzyme from Clostridium kluyveri (strain NBRC 12016).